The sequence spans 161 residues: 3-isopropylmalate dehydratase small subunit (161 aa).

The protein belongs to the LeuD family. LeuD type 2 subfamily. In terms of assembly, heterodimer of LeuC and LeuD.

The catalysed reaction is (2R,3S)-3-isopropylmalate = (2S)-2-isopropylmalate. It participates in amino-acid biosynthesis; L-leucine biosynthesis; L-leucine from 3-methyl-2-oxobutanoate: step 2/4. Catalyzes the isomerization between 2-isopropylmalate and 3-isopropylmalate, via the formation of 2-isopropylmaleate. This Pyrobaculum calidifontis (strain DSM 21063 / JCM 11548 / VA1) protein is 3-isopropylmalate dehydratase small subunit.